Reading from the N-terminus, the 146-residue chain is UPF0260 protein Sden_1632 (146 aa).

The protein belongs to the UPF0260 family.

The sequence is that of UPF0260 protein Sden_1632 from Shewanella denitrificans (strain OS217 / ATCC BAA-1090 / DSM 15013).